A 349-amino-acid polypeptide reads, in one-letter code: Protein RecA (349 aa).

ATP is bound at residue 64–71 (GPESSGKT). A disordered region spans residues 328-349 (NGEIEVEAPSEEEFEDLPLDLK). A compositionally biased stretch (acidic residues) spans 331-349 (IEVEAPSEEEFEDLPLDLK).

It belongs to the RecA family.

The protein resides in the cytoplasm. Can catalyze the hydrolysis of ATP in the presence of single-stranded DNA, the ATP-dependent uptake of single-stranded DNA by duplex DNA, and the ATP-dependent hybridization of homologous single-stranded DNAs. It interacts with LexA causing its activation and leading to its autocatalytic cleavage. This Halalkalibacterium halodurans (strain ATCC BAA-125 / DSM 18197 / FERM 7344 / JCM 9153 / C-125) (Bacillus halodurans) protein is Protein RecA.